The sequence spans 102 residues: Large ribosomal subunit protein bL21 (102 aa).

This sequence belongs to the bacterial ribosomal protein bL21 family. In terms of assembly, part of the 50S ribosomal subunit. Contacts protein L20.

Its function is as follows. This protein binds to 23S rRNA in the presence of protein L20. The protein is Large ribosomal subunit protein bL21 of Levilactobacillus brevis (strain ATCC 367 / BCRC 12310 / CIP 105137 / JCM 1170 / LMG 11437 / NCIMB 947 / NCTC 947) (Lactobacillus brevis).